The sequence spans 279 residues: Undecaprenyl-diphosphatase (279 aa).

Transmembrane regions (helical) follow at residues 17-37 (TEFLPVSSTGHLFLFSYFFPF), 46-66 (AFEDLFDIFIQTGAILSVVVL), 92-112 (FQFYLNLIVGILPILILGFLL), 123-143 (SDLLLILGMSWFVGGIIMVFV), 156-176 (IGFKESIIVGFLQCFALIPGV), 197-217 (AEFSFFLAIPVLTLAGIYKLY), 226-246 (ETIGLLLFGSIISFIICYFII), and 257-277 (SFISFGVYRILLGLLVILYFV).

It belongs to the UppP family.

Its subcellular location is the cell inner membrane. It carries out the reaction di-trans,octa-cis-undecaprenyl diphosphate + H2O = di-trans,octa-cis-undecaprenyl phosphate + phosphate + H(+). Its function is as follows. Catalyzes the dephosphorylation of undecaprenyl diphosphate (UPP). Confers resistance to bacitracin. The protein is Undecaprenyl-diphosphatase of Leptospira biflexa serovar Patoc (strain Patoc 1 / ATCC 23582 / Paris).